A 213-amino-acid chain; its full sequence is MDSANGCGILKKERRSEEHHYKVHRRVLRWMKSAEKIKRELDEGYEKKWRNRSIEEIKEQKKVHDIVEVMKLLRDKEECDRFFVRTGKYMKGGSERWKMVANGILEEGGEKKVRKVEVGLFKGERGGSVVYHLMFRPTETERTGRVGGSSFGKYDDVDEIKKEESSDMSGFRYPPGVRCEMTSNGNEFRIEYRNPKNTSEVLRTLTILRIPEI.

This sequence belongs to the UPF0329 family.

The polypeptide is UPF0329 protein ECU04_0110 (Encephalitozoon cuniculi (strain GB-M1) (Microsporidian parasite)).